A 299-amino-acid chain; its full sequence is 4-hydroxybenzoate octaprenyltransferase (299 aa).

8 consecutive transmembrane segments (helical) span residues 33–53 (VGFL…AGGV), 56–76 (WWTL…GCVI), 107–127 (LLMF…MNQL), 151–171 (LPQV…FAAI), 180–200 (WLLY…CAMV), 214–234 (AILF…LMLF), 247–267 (HTYW…FIIA), and 278–298 (AFMH…LATT).

The protein belongs to the UbiA prenyltransferase family. It depends on Mg(2+) as a cofactor.

It localises to the cell inner membrane. The enzyme catalyses all-trans-octaprenyl diphosphate + 4-hydroxybenzoate = 4-hydroxy-3-(all-trans-octaprenyl)benzoate + diphosphate. Its pathway is cofactor biosynthesis; ubiquinone biosynthesis. Catalyzes the prenylation of para-hydroxybenzoate (PHB) with an all-trans polyprenyl group. Mediates the second step in the final reaction sequence of ubiquinone-8 (UQ-8) biosynthesis, which is the condensation of the polyisoprenoid side chain with PHB, generating the first membrane-bound Q intermediate 3-octaprenyl-4-hydroxybenzoate. In Xylella fastidiosa (strain 9a5c), this protein is 4-hydroxybenzoate octaprenyltransferase.